Reading from the N-terminus, the 346-residue chain is Ribonucleoside-diphosphate reductase subunit beta (346 aa).

Glutamate 89, glutamate 120, and histidine 123 together coordinate Fe cation. Residue tyrosine 129 is part of the active site. Residues glutamate 193, glutamate 227, and histidine 230 each contribute to the Fe cation site.

It belongs to the ribonucleoside diphosphate reductase small chain family. Tetramer of two alpha and two beta subunits. The cofactor is Fe cation.

It carries out the reaction a 2'-deoxyribonucleoside 5'-diphosphate + [thioredoxin]-disulfide + H2O = a ribonucleoside 5'-diphosphate + [thioredoxin]-dithiol. Functionally, provides the precursors necessary for DNA synthesis. Catalyzes the biosynthesis of deoxyribonucleotides from the corresponding ribonucleotides. This chain is Ribonucleoside-diphosphate reductase subunit beta (nrdB), found in Chlamydia pneumoniae (Chlamydophila pneumoniae).